The sequence spans 95 residues: CRISPR-associated endoribonuclease Cas2 (95 aa).

Asp-9 contributes to the Mg(2+) binding site.

Belongs to the CRISPR-associated endoribonuclease Cas2 protein family. In terms of assembly, homodimer, forms a heterotetramer with a Cas1 homodimer. Mg(2+) is required as a cofactor.

In terms of biological role, CRISPR (clustered regularly interspaced short palindromic repeat), is an adaptive immune system that provides protection against mobile genetic elements (viruses, transposable elements and conjugative plasmids). CRISPR clusters contain sequences complementary to antecedent mobile elements and target invading nucleic acids. CRISPR clusters are transcribed and processed into CRISPR RNA (crRNA). Functions as a ssRNA-specific endoribonuclease. Involved in the integration of spacer DNA into the CRISPR cassette. The polypeptide is CRISPR-associated endoribonuclease Cas2 (Methylorubrum extorquens (strain CM4 / NCIMB 13688) (Methylobacterium extorquens)).